Consider the following 382-residue polypeptide: uncharacterized protein (382 aa).

This is an uncharacterized protein from Orgyia pseudotsugata multicapsid polyhedrosis virus (OpMNPV).